The primary structure comprises 221 residues: Ras-related protein Rab-28 (221 aa).

The residue at position 2 (serine 2) is an N-acetylserine. Serine 8 carries the post-translational modification Phosphoserine. Residues glycine 21, glycine 24, lysine 25, threonine 26, serine 27, glycine 38, lysine 39, tyrosine 41, and threonine 44 each coordinate GTP. Threonine 26 is a binding site for Mg(2+). The segment at 35-49 is switch I; the sequence is ETFGKRYKQTIGLDF. Residues threonine 44 and aspartate 68 each contribute to the Mg(2+) site. A switch II region spans residues 68–85; that stretch reads DIGGQTIGGKMLDKYIYG. Glycine 71, asparagine 129, lysine 130, aspartate 132, alanine 160, and lysine 161 together coordinate GTP. Cysteine 218 carries the cysteine methyl ester modification. Cysteine 218 is lipidated: S-farnesyl cysteine. Positions 219-221 are cleaved as a propeptide — removed in mature form; that stretch reads AVQ.

It belongs to the small GTPase superfamily. Rab family. In terms of assembly, interacts (prenylated form) with PDE6D; the interaction promotes RAB28 delivery to the photoreceptor outer segments. Interacts with KCNJ13; the interaction may facilitate cone outer segments phagocytosis. Also participates in nuclear factor kappa-B p65/RELA nuclear transport in endothelial cells. The cofactor is Mg(2+). Post-translationally, isoprenylated.

Its subcellular location is the cell membrane. The protein resides in the cytoplasm. It localises to the cytoskeleton. It is found in the cilium basal body. The protein localises to the nucleus. The enzyme catalyses GTP + H2O = GDP + phosphate + H(+). With respect to regulation, regulated by guanine nucleotide exchange factors (GEFs) which promote the exchange of bound GDP for free GTP. Regulated by GTPase activating proteins (GAPs) which increase the GTP hydrolysis activity. Inhibited by GDP dissociation inhibitors (GDIs). Functionally, the small GTPases Rab are key regulators of intracellular membrane trafficking, from the formation of transport vesicles to their fusion with membranes. Rabs cycle between an inactive GDP-bound form and an active GTP-bound form that is able to recruit to membranes different sets of downstream effectors directly responsible for vesicle formation, movement, tethering and fusion. RAB28 is required for shedding and phagocytosis of cone cell outer segments (OS) discs in the retina. Also participates in nuclear factor kappa-B p65/RELA nuclear transport in endothelial cells. The chain is Ras-related protein Rab-28 (RAB28) from Pongo abelii (Sumatran orangutan).